The sequence spans 207 residues: Imidazole glycerol phosphate synthase subunit HisH (207 aa).

The region spanning 1–206 (MMIVIGYDAG…KEYVYENTAR (206 aa)) is the Glutamine amidotransferase type-1 domain. Catalysis depends on Cys79, which acts as the Nucleophile. Residues His181 and Glu183 contribute to the active site.

As to quaternary structure, heterodimer of HisH and HisF.

The protein resides in the cytoplasm. The enzyme catalyses 5-[(5-phospho-1-deoxy-D-ribulos-1-ylimino)methylamino]-1-(5-phospho-beta-D-ribosyl)imidazole-4-carboxamide + L-glutamine = D-erythro-1-(imidazol-4-yl)glycerol 3-phosphate + 5-amino-1-(5-phospho-beta-D-ribosyl)imidazole-4-carboxamide + L-glutamate + H(+). It catalyses the reaction L-glutamine + H2O = L-glutamate + NH4(+). The protein operates within amino-acid biosynthesis; L-histidine biosynthesis; L-histidine from 5-phospho-alpha-D-ribose 1-diphosphate: step 5/9. In terms of biological role, IGPS catalyzes the conversion of PRFAR and glutamine to IGP, AICAR and glutamate. The HisH subunit catalyzes the hydrolysis of glutamine to glutamate and ammonia as part of the synthesis of IGP and AICAR. The resulting ammonia molecule is channeled to the active site of HisF. This Streptococcus gordonii (strain Challis / ATCC 35105 / BCRC 15272 / CH1 / DL1 / V288) protein is Imidazole glycerol phosphate synthase subunit HisH.